Consider the following 486-residue polypeptide: Serine/threonine-protein phosphatase 2A 56 kDa regulatory subunit alpha isoform (486 aa).

Residues 1 to 18 are compositionally biased toward low complexity; the sequence is MSSSSPPAGAASAAISAS. The tract at residues 1 to 52 is disordered; that stretch reads MSSSSPPAGAASAAISASEKVDGFTRKSVRKAQRQKRSQGSSQFRSQGSQAE. Ser2 carries the N-acetylserine modification. The segment covering 27–37 has biased composition (basic residues); sequence KSVRKAQRQKR. A compositionally biased stretch (low complexity) spans 38–51; sequence SQGSSQFRSQGSQA. Ser41, Ser42, and Ser49 each carry phosphoserine.

This sequence belongs to the phosphatase 2A regulatory subunit B56 family. In terms of assembly, PP2A consists of a common heterodimeric core enzyme, composed of a 36 kDa catalytic subunit (subunit C) and a 65 kDa constant regulatory subunit (PR65 or subunit A), that associates with a variety of regulatory subunits. Proteins that associate with the core dimer include three families of regulatory subunits B (the R2/B/PR55/B55, R3/B''/PR72/PR130/PR59 and R5/B'/B56 families), the 48 kDa variable regulatory subunit, viral proteins, and cell signaling molecules. Interacts with SGO1. Phosphorylated on serine residues. In terms of tissue distribution, widely expressed with the highest expression in heart and skeletal muscle.

It is found in the cytoplasm. The protein resides in the nucleus. It localises to the chromosome. Its subcellular location is the centromere. The B regulatory subunit might modulate substrate selectivity and catalytic activity, and might also direct the localization of the catalytic enzyme to a particular subcellular compartment. The chain is Serine/threonine-protein phosphatase 2A 56 kDa regulatory subunit alpha isoform (PPP2R5A) from Homo sapiens (Human).